The following is a 214-amino-acid chain: uncharacterized protein (214 aa).

The helical transmembrane segment at Leu-10–Ser-30 threads the bilayer. The segment covering Ser-147–Pro-157 has biased composition (polar residues). Residues Ser-147–Phe-166 are disordered.

Its subcellular location is the membrane. This is an uncharacterized protein from Schizosaccharomyces pombe (strain 972 / ATCC 24843) (Fission yeast).